The following is a 651-amino-acid chain: MADVLSRFNSGKLWDFKGGIHPPEMKSQSNSQPLRHLPLGTDFYIPLKQHLGTTGNLLIKEGDYVLKGQALTKGDGLRMLPVHAPTSGTIKSIKPYVATHPSGLDEPTIHLQSDGLDQWIERNPIDDFSTLSPEQLIHKIYQAGIAGLGGAVFPTAAKIQSAEQKVKLLIINGAECEPYITCDDRLMRERADEIIKGIRILRYILHPEKVVIAIEDNKPEAISAIRNALQGANDISVRVIPTKYPSGATKQLIYLLTGIEVPSGERSSSIGVLMQNVGTMFAIKRAVINDEPLIERVVTLTGNKIAEKGNYWVRLGTPISQILSDAGYQFDKHFPIFAGGPMMGLELPNLNAPVTKLVNCLLAPDYLEYAEPEAEQACIRCSSCSDACPVNLMPQQLYWFARSEDHKKSEEYALKDCIECGICAYVCPSHIPLIQYFRQEKAKIWQIKEKQKKSDEAKIRFEAKQARMEREEQERKARSQRAAQARREELAQTKGEDPVKAALERLKAKKANETESTQIKTLTSEKGEVLPDNTDLMAQRKARRLARQQAASQVENQEQQTQPTDAKKAVVAAAIARAKAKKLAQANSTSEAISNSQTAENEVEKTKSAVEKTQENSTALDPKKAAVAAAIARAKAKKLAKTQTTLENNQE.

2 4Fe-4S ferredoxin-type domains span residues 368-398 (EYAE…QQLY) and 408-437 (KSEE…IQYF). Residues Cys378, Cys381, Cys384, Cys388, Cys417, Cys420, Cys423, and Cys427 each coordinate [4Fe-4S] cluster. Basic and acidic residues-rich tracts occupy residues 465–477 (QARM…ERKA) and 485–513 (ARRE…KANE). Disordered regions lie at residues 465 to 565 (QARM…QPTD) and 583 to 624 (LAQA…DPKK). Polar residues-rich tracts occupy residues 554–564 (VENQEQQTQPT) and 587–600 (NSTS…QTAE). A compositionally biased stretch (basic and acidic residues) spans 602–614 (EVEKTKSAVEKTQ).

This sequence belongs to the 4Fe4S bacterial-type ferredoxin family. RnfC subfamily. In terms of assembly, the complex is composed of six subunits: RnfA, RnfB, RnfC, RnfD, RnfE and RnfG. [4Fe-4S] cluster is required as a cofactor.

It is found in the cell inner membrane. Part of a membrane-bound complex that couples electron transfer with translocation of ions across the membrane. This chain is Ion-translocating oxidoreductase complex subunit C, found in Haemophilus influenzae (strain PittEE).